Consider the following 638-residue polypeptide: 1-deoxy-D-xylulose-5-phosphate synthase (638 aa).

Thiamine diphosphate is bound by residues histidine 72 and 113-115; that span reads GHA. Position 144 (aspartate 144) interacts with Mg(2+). Thiamine diphosphate is bound by residues 145–146, asparagine 174, tyrosine 287, and glutamate 370; that span reads GA. Residue asparagine 174 coordinates Mg(2+).

The protein belongs to the transketolase family. DXPS subfamily. In terms of assembly, homodimer. Requires Mg(2+) as cofactor. The cofactor is thiamine diphosphate.

It carries out the reaction D-glyceraldehyde 3-phosphate + pyruvate + H(+) = 1-deoxy-D-xylulose 5-phosphate + CO2. The protein operates within metabolic intermediate biosynthesis; 1-deoxy-D-xylulose 5-phosphate biosynthesis; 1-deoxy-D-xylulose 5-phosphate from D-glyceraldehyde 3-phosphate and pyruvate: step 1/1. Catalyzes the acyloin condensation reaction between C atoms 2 and 3 of pyruvate and glyceraldehyde 3-phosphate to yield 1-deoxy-D-xylulose-5-phosphate (DXP). The protein is 1-deoxy-D-xylulose-5-phosphate synthase of Picosynechococcus sp. (strain ATCC 27264 / PCC 7002 / PR-6) (Agmenellum quadruplicatum).